Reading from the N-terminus, the 213-residue chain is Uridine kinase (213 aa).

Residue 13–20 coordinates ATP; it reads GASASGKS.

Belongs to the uridine kinase family.

The protein resides in the cytoplasm. The enzyme catalyses uridine + ATP = UMP + ADP + H(+). It catalyses the reaction cytidine + ATP = CMP + ADP + H(+). It functions in the pathway pyrimidine metabolism; CTP biosynthesis via salvage pathway; CTP from cytidine: step 1/3. The protein operates within pyrimidine metabolism; UMP biosynthesis via salvage pathway; UMP from uridine: step 1/1. This chain is Uridine kinase, found in Haemophilus influenzae (strain PittEE).